The following is a 598-amino-acid chain: Integrator complex subunit 11 (598 aa).

Zn(2+) is bound by residues His-68, His-70, Asp-72, His-73, His-157, and Asp-178. The short motif at 68–73 is the HXHXDH motif element; the sequence is HFHLDH. Glu-203 is a catalytic residue. Position 414 (His-414) interacts with Zn(2+). Positions 470–480 match the Nuclear localization signal motif; sequence PLPDAKRPRTM.

Belongs to the metallo-beta-lactamase superfamily. RNA-metabolizing metallo-beta-lactamase-like family. INTS11 subfamily. As to quaternary structure, component of the Integrator complex, composed of core subunits INTS1, INTS2, INTS3, INTS4, INTS5, INTS6, INTS7, INTS8, INTS9/RC74, INTS10, INTS11/CPSF3L, INTS12, INTS13, INTS14 and INTS15. The core complex associates with protein phosphatase 2A subunits PPP2CA and PPP2R1A, to form the Integrator-PP2A (INTAC) complex. INTS11 is part of the RNA endonuclease subcomplex, composed of INTS4, INTS9, INTS11 and inositol hexakisphosphate (InsP6). The cofactor is Zn(2+).

It localises to the nucleus. Its subcellular location is the cytoplasm. Its function is as follows. RNA endonuclease component of the integrator complex, a multiprotein complex that terminates RNA polymerase II (Pol II) transcription in the promoter-proximal region of genes. The integrator complex provides a quality checkpoint during transcription elongation by driving premature transcription termination of transcripts that are unfavorably configured for transcriptional elongation: the complex terminates transcription by (1) catalyzing dephosphorylation of the C-terminal domain (CTD) of Pol II subunit POLR2A/RPB1 and SUPT5H/SPT5, (2) degrading the exiting nascent RNA transcript via endonuclease activity and (3) promoting the release of Pol II from bound DNA. The integrator complex is also involved in terminating the synthesis of non-coding Pol II transcripts, such as enhancer RNAs (eRNAs), small nuclear RNAs (snRNAs), telomerase RNAs and long non-coding RNAs (lncRNAs). Within the integrator complex, INTS11 constitutes the RNA endonuclease subunit that degrades exiting nascent RNA transcripts. The polypeptide is Integrator complex subunit 11 (cpsf3l) (Danio rerio (Zebrafish)).